Reading from the N-terminus, the 269-residue chain is Small ribosomal subunit protein uS2 (269 aa).

The segment at 224 to 269 (ANQGREDSEDVYSETENDTEETDEELVSEEDLKEFVENSEEESDEE) is disordered. The segment covering 230–269 (DSEDVYSETENDTEETDEELVSEEDLKEFVENSEEESDEE) has biased composition (acidic residues).

It belongs to the universal ribosomal protein uS2 family.

This chain is Small ribosomal subunit protein uS2, found in Finegoldia magna (strain ATCC 29328 / DSM 20472 / WAL 2508) (Peptostreptococcus magnus).